Consider the following 290-residue polypeptide: MLENVKKSLFRVLCLGALCLGGLMAEQDPKELVGLGAKSYKEQDFTQAKKYFEKACDLKENSGCFNLGVLYYQGHGVEKNLKKAASFYSKACDLNYSNGCHLLGNLYYSGQGVSQNTNKALQYYSKACDLKYAEGCASLGGIYHDGKVVTRDFKKAVEYFTKACDLNDGDGCTILGSLYDAGRGTPKDLKKALASYDKACDLKDSPGCFNAGNMYHHGEGAAKNFKEALARYSKACELENGGGCFNLGAMQYNGEGATRNEKQAIENFKKGCKLGAKGACDILKQLKIKV.

A signal peptide spans methionine 1 to alanine 25. 7 TPR repeats span residues proline 29 to serine 62, cysteine 64 to asparagine 98, cysteine 100 to alanine 133, glutamate 134 to aspartate 170, cysteine 172 to serine 205, proline 206 to glycine 242, and cysteine 244 to glycine 278. Intrachain disulfides connect cysteine 56–cysteine 64, cysteine 92–cysteine 100, cysteine 128–cysteine 136, cysteine 164–cysteine 172, cysteine 200–cysteine 208, cysteine 236–cysteine 244, and cysteine 272–cysteine 280.

It belongs to the hcp beta-lactamase family.

It localises to the secreted. The enzyme catalyses a beta-lactam + H2O = a substituted beta-amino acid. Its function is as follows. May hydrolyze 6-aminopenicillinic acid and 7-aminocephalosporanic acid (ACA) derivatives. The sequence is that of Putative beta-lactamase HcpC (hcpC) from Helicobacter pylori (strain J99 / ATCC 700824) (Campylobacter pylori J99).